The primary structure comprises 292 residues: Cbb3-type cytochrome c oxidase subunit CcoP (292 aa).

2 helical membrane passes run 11–31 (FGLI…SSLI) and 62–82 (VGWI…FFFG). 2 consecutive Cytochrome c domains span residues 116 to 195 (ELVD…MAEI) and 205 to 288 (QLID…QSLK). Heme c-binding residues include C129, C132, H133, M174, C219, C222, H223, and M264.

The protein belongs to the CcoP / FixP family. In terms of assembly, component of the cbb3-type cytochrome c oxidase at least composed of CcoN, CcoO, CcoQ and CcoP. Heme c serves as cofactor.

It is found in the cell inner membrane. It functions in the pathway energy metabolism; oxidative phosphorylation. C-type cytochrome. Part of the cbb3-type cytochrome c oxidase complex. CcoP subunit is required for transferring electrons from donor cytochrome c via its heme groups to CcoO subunit. From there, electrons are shuttled to the catalytic binuclear center of CcoN subunit where oxygen reduction takes place. The complex also functions as a proton pump. In Helicobacter pylori (strain 52), this protein is Cbb3-type cytochrome c oxidase subunit CcoP.